The following is a 273-amino-acid chain: Hydroxyethylthiazole kinase (273 aa).

Met41 is a substrate binding site. Residues Arg117 and Thr170 each contribute to the ATP site. Gly197 serves as a coordination point for substrate.

The protein belongs to the Thz kinase family. Requires Mg(2+) as cofactor.

The enzyme catalyses 5-(2-hydroxyethyl)-4-methylthiazole + ATP = 4-methyl-5-(2-phosphooxyethyl)-thiazole + ADP + H(+). Its pathway is cofactor biosynthesis; thiamine diphosphate biosynthesis; 4-methyl-5-(2-phosphoethyl)-thiazole from 5-(2-hydroxyethyl)-4-methylthiazole: step 1/1. Catalyzes the phosphorylation of the hydroxyl group of 4-methyl-5-beta-hydroxyethylthiazole (THZ). This is Hydroxyethylthiazole kinase from Clostridium acetobutylicum (strain ATCC 824 / DSM 792 / JCM 1419 / IAM 19013 / LMG 5710 / NBRC 13948 / NRRL B-527 / VKM B-1787 / 2291 / W).